The sequence spans 471 residues: MEYNKKIVTDLTDLKGKKVILRCDFNVPINKTSGEITDYTRIDAALQTINYLLDKGVKLIVLSHLSRVKTLEDISSGKKSLKVVHKALKNRLLGKTVLFEENNRNKDLPKIIDGMEEGSLLLLENTRYADVNEKGEVVKLESKNDPSLGKFWASLADIFVNDAFGTSHRAHASNVGIAKNIKESAIGFLVNKELAKLSKAVVNPRKPVVAIFGGAKVSDKVPSIKNIGKFADKILIGGGMAFIFLKAKGFEIGKSLYEDDQLELTKELLSEFGNKIVLPVDAVVADSIKAAKGKRYDMEQFPADLAGFDVGKKTIKLFKKELKLAETVIWNGPLGVFENDAFNKGTLKVCKYIAKITAKKGCYSVIGGGDSAAAAAKCGVTHSFSHISTGGGASLEFFSGVELPGVACIKNKGEEGKVEAVKEKTTTTTESASKEKSSTAKTASKPATSKTTAAKKPAEKKPAAKKPAAKK.

Substrate contacts are provided by residues 24-26 (DFN), R41, 64-67 (HLSR), R127, and R169. ATP-binding positions include K220, G307, E338, and 368–371 (GGDS). Residues 417-471 (KVEAVKEKTTTTTESASKEKSSTAKTASKPATSKTTAAKKPAEKKPAAKKPAAKK) are disordered. The segment covering 439–455 (TAKTASKPATSKTTAAK) has biased composition (low complexity).

Belongs to the phosphoglycerate kinase family. In terms of assembly, monomer.

It localises to the cytoplasm. It carries out the reaction (2R)-3-phosphoglycerate + ATP = (2R)-3-phospho-glyceroyl phosphate + ADP. The protein operates within carbohydrate degradation; glycolysis; pyruvate from D-glyceraldehyde 3-phosphate: step 2/5. This is Phosphoglycerate kinase from Malacoplasma penetrans (strain HF-2) (Mycoplasma penetrans).